Reading from the N-terminus, the 262-residue chain is MVLISVLANLLILQLSYAQKSSELVIGGDECNINEHRFLVALYNSRSRTLFCGGTLINQEWVLTAAHCERKNFRIKLGIHSKKVPNEDEQTRVPKEKFFCLSSKNYTLWDKDIMLIRLDSPVSNSEHIAPLSLPSSPPSVGSVCRIMGWGRISPTKETYPDVPHCANINLLEYEMCRAPYPEFGLPATSRTLCAGILEGGKDTCRGDSGGPLICNGQFQGIASWGDDPCAQPHKPAAYTKVFDHLDWIQSIIAGNTDASCPP.

The N-terminal stretch at 1–18 is a signal peptide; that stretch reads MVLISVLANLLILQLSYA. A propeptide spanning residues 19–24 is cleaved from the precursor; sequence QKSSEL. The Peptidase S1 domain occupies 25–253; that stretch reads VIGGDECNIN…HLDWIQSIIA (229 aa). Disulfide bonds link Cys31/Cys165, Cys52/Cys68, Cys100/Cys260, Cys144/Cys214, Cys176/Cys193, and Cys204/Cys229. The Charge relay system role is filled by His67. Asn105 carries an N-linked (GlcNAc...) asparagine glycan. The active-site Charge relay system is the Asp112. The active-site Charge relay system is Ser208.

This sequence belongs to the peptidase S1 family. Snake venom subfamily. In terms of assembly, monomer. In terms of processing, N-glycosylated. In terms of tissue distribution, expressed by the venom gland.

It is found in the secreted. With respect to regulation, strongly inhibited by PMSF, and moderately by benzamidine and soybean trypsin inhibitor. Functionally, thrombin-like snake venom serine protease. Has a coagulant activity. Acts on alpha-chains of fibrinogen (FGA) generating fibrinopeptide A. This Gloydius ussuriensis (Ussuri mamushi) protein is Thrombin-like enzyme calobin-1.